A 280-amino-acid chain; its full sequence is Manganese transport system membrane protein MntC (280 aa).

Helical transmembrane passes span 16 to 36 (ALIT…FIIL), 41 to 61 (LMGD…YMMG), 62 to 82 (MNFF…IGFV), 92 to 112 (TAIG…ISFA), 137 to 157 (TIII…EFLV), 168 to 188 (YGLN…LVTV), 193 to 213 (TVGI…AYLL), 221 to 241 (IVLA…FSYI), and 244 to 264 (LASG…AFLF).

This sequence belongs to the ABC-3 integral membrane protein family.

The protein resides in the cell membrane. This protein is probably a component of a manganese permease, a binding protein-dependent, ATP-driven transport system. The protein is Manganese transport system membrane protein MntC (mntC) of Listeria monocytogenes serovar 1/2a (strain ATCC BAA-679 / EGD-e).